The primary structure comprises 246 residues: Acetoacetate decarboxylase (246 aa).

Catalysis depends on K115, which acts as the Schiff-base intermediate with acetoacetate.

The protein belongs to the ADC family.

It carries out the reaction acetoacetate + H(+) = acetone + CO2. Catalyzes the conversion of acetoacetate to acetone and carbon dioxide. The polypeptide is Acetoacetate decarboxylase (Clostridium beijerinckii (strain ATCC 51743 / NCIMB 8052) (Clostridium acetobutylicum)).